Here is a 218-residue protein sequence, read N- to C-terminus: Guanylate kinase (218 aa).

The Guanylate kinase-like domain occupies 10–190; it reads GLLIILSSPS…TEERLKTIIT (181 aa). 17–24 is an ATP binding site; the sequence is SPSGAGKS.

Belongs to the guanylate kinase family.

The protein resides in the cytoplasm. The catalysed reaction is GMP + ATP = GDP + ADP. Functionally, essential for recycling GMP and indirectly, cGMP. This is Guanylate kinase from Jannaschia sp. (strain CCS1).